A 118-amino-acid polypeptide reads, in one-letter code: Beta-2-microglobulin (118 aa).

The signal sequence occupies residues 1–20 (MARVVALVLLGLLSLTGLEA). One can recognise an Ig-like C1-type domain in the interval 22-115 (PRVPKVQVYS…LKDPLIVKWD (94 aa)). A disulfide bond links Cys-45 and Cys-99.

It belongs to the beta-2-microglobulin family. Heterodimer of an alpha chain and a beta chain. Beta-2-microglobulin is the beta-chain of major histocompatibility complex class I molecules.

Its subcellular location is the secreted. Its function is as follows. Component of the class I major histocompatibility complex (MHC). Involved in the presentation of peptide antigens to the immune system. This is Beta-2-microglobulin (B2M) from Equus caballus (Horse).